Here is a 273-residue protein sequence, read N- to C-terminus: Putative phosphoenolpyruvate synthase regulatory protein (273 aa).

Alanine 153–threonine 160 is an ADP binding site.

It belongs to the pyruvate, phosphate/water dikinase regulatory protein family. PSRP subfamily.

It carries out the reaction [pyruvate, water dikinase] + ADP = [pyruvate, water dikinase]-phosphate + AMP + H(+). The enzyme catalyses [pyruvate, water dikinase]-phosphate + phosphate + H(+) = [pyruvate, water dikinase] + diphosphate. Bifunctional serine/threonine kinase and phosphorylase involved in the regulation of the phosphoenolpyruvate synthase (PEPS) by catalyzing its phosphorylation/dephosphorylation. This Xylella fastidiosa (strain M12) protein is Putative phosphoenolpyruvate synthase regulatory protein.